The sequence spans 223 residues: Ras-related protein Rab-21 (223 aa).

Residue Ala2 is modified to N-acetylalanine. GTP is bound by residues Gly26, Gly29, Lys30, Thr31, Ser32, Asn43, Asp44, His46, Thr48, and Thr49. Thr31 is a Mg(2+) binding site. Positions 41 to 54 (KFNDKHITTLQASF) match the Switch 1 motif. Positions 49 and 72 each coordinate Mg(2+). The Switch 2 signature appears at 74–92 (AGQERFHALGPIYYRDSNG). Residues Gly75, Asn130, Lys131, Asp133, Ala161, and Lys162 each contribute to the GTP site. S-geranylgeranyl cysteine attachment occurs at residues Cys219 and Cys220. Position 220 is a cysteine methyl ester (Cys220). The propeptide at 221–223 (SSG) is removed in mature form.

It belongs to the small GTPase superfamily. Rab family. In terms of assembly, interacts with the cytoplasmic tail of integrins ITGA1, ITGA2, ITGA5, ITGA6, ITGA11 and ITGB1; this interaction is dependent upon its GDP/GTP cycle. Interacts with RABGEF1 (via VPS9 domain). Interacts with ANKRD27. Interacts (in GTP-bound form) with VAMP8 in response to starvation; the interaction probably regulates VAMP8 endolysosomal trafficking. Interacts (active GTP-bound form) with TMED10; the interaction is indirect and regulates TMED10 abundance and localization at the Golgi. Requires Mg(2+) as cofactor.

It is found in the endoplasmic reticulum membrane. The protein resides in the golgi apparatus. Its subcellular location is the trans-Golgi network. The protein localises to the golgi apparatus membrane. It localises to the early endosome membrane. It is found in the cytoplasmic vesicle membrane. The protein resides in the cleavage furrow. Its subcellular location is the cell projection. The protein localises to the neuron projection. It carries out the reaction GTP + H2O = GDP + phosphate + H(+). Its activity is regulated as follows. Regulated by guanine nucleotide exchange factors (GEFs) including ANKRD27 and RABGEF1, which promote the exchange of bound GDP for free GTP. Regulated by GTPase activating proteins (GAPs) which increase the GTP hydrolysis activity. Inhibited by GDP dissociation inhibitors (GDIs). The small GTPases Rab are key regulators of intracellular membrane trafficking, from the formation of transport vesicles to their fusion with membranes. Rabs cycle between an inactive GDP-bound form and an active GTP-bound form that is able to recruit to membranes different sets of downstream effectors directly responsible for vesicle formation, movement, tethering and fusion. RAB21 is involved in membrane trafficking control. Regulates integrin internalization and recycling, but does not influence the traffic of endosomally translocated receptors in general. As a result, may regulate cell adhesion and migration. During the mitosis of adherent cells, controls the endosomal trafficking of integrins which is required for the successful completion of cytokinesis. Involved in neurite growth. Following SBF2/MTMT13-mediated activation in response to starvation-induced autophagy, binds to and regulates SNARE protein VAMP8 endolysosomal transport required for SNARE-mediated autophagosome-lysosome fusion. Modulates protein levels of the cargo receptors TMED2 and TMED10, and required for appropriate Golgi localization of TMED10. The protein is Ras-related protein Rab-21 of Rattus norvegicus (Rat).